A 756-amino-acid polypeptide reads, in one-letter code: MHLKIVLAFLALSLITIFALAYVLLTSPGGSSQPPHCPSVSHRAQPWPHPGQSQLFADLSREELTAVMRFLTQRLGPGLVDAAQAQPSDNCIFSVELQLPPKAAALAHLDRGSPPPAREALAIVLFGGQPQPNVSELVVGPLPHPSYMRDVTVERHGGPLPYHRRPVLRAEFTQMWRHLKEVELPKAPIFLSSTFNYNGSTLAAVHATPRGLRSGDRATWMALYHNISGVGLFLHPVGLELLLDHRALDPAHWTVQQVFYLGHYYADLGQLEREFKSGRLEVVRVPLPPPNGASSLRSRNSPGPLPPLQFSPQGSQYSVQGNLVVSSLWSFTFGHGVFSGLRIFDVRFQGERIAYEVSVQECVSIYGADSPKTMLTRYLDSSFGLGRNSRGLVRGVDCPYQATMVDIHILVGKGAVQLLPGAVCVFEEAQGLPLRRHHNYLQNHFYGGLASSALVVRSVSSVGNYDYIWDFVLYPNGALEGRVHATGYINTAFLKGGEEGLLFGNRVGERVLGTVHTHAFHFKLDLDVAGLKNWVVAEDVVFKPVAAPWNPEHWLQRPQLTRQVLGKEDLTAFSLGSPLPRYLYLASNQTNAWGHQRGYRIQIHSPLGIHIPLESDMERALSWGRYQLVVTQRKEEESQSSSIYHQNDIWTPTVTFADFINNETLLGEDLVAWVTASFLHIPHAEDIPNTVTLGNRVGFLLRPYNFFDEDPSIFSPGSVYFEKGQDAGLCSINPVACLPDLAACVPDLPPFSYHGF.

Residues 1–4 are Cytoplasmic-facing; sequence MHLK. The helical transmembrane segment at 5-25 threads the bilayer; the sequence is IVLAFLALSLITIFALAYVLL. Over 26-756 the chain is Extracellular; the sequence is TSPGGSSQPP…DLPPFSYHGF (731 aa). N133, N198, and N226 each carry an N-linked (GlcNAc...) asparagine glycan. The Proton acceptor role is filled by D380. C398 and C424 are disulfide-bonded. Y465 acts as the Schiff-base intermediate with substrate; via topaquinone in catalysis. Position 465 is a 2',4',5'-topaquinone (Y465). Cu(2+) contacts are provided by H516 and H518. D525, L526, D527, E568, E637, F659, and N661 together coordinate Ca(2+). N-linked (GlcNAc...) asparagine glycosylation occurs at N662. Positions 663, 669, and 670 each coordinate Ca(2+). H680 serves as a coordination point for Cu(2+). C730 and C737 are disulfide-bonded.

It belongs to the copper/topaquinone oxidase family. Homodimer; disulfide-linked. Probably forms heterodimers with AOC3. It depends on Cu(2+) as a cofactor. The cofactor is Ca(2+). Requires L-topaquinone as cofactor. Post-translationally, topaquinone (TPQ) is generated by copper-dependent autoxidation of a specific tyrosyl residue. Expressed in many tissues including adipocytes with higher expression in retina where it is active. As to expression, not expressed in testis. In terms of tissue distribution, not expressed in thymus.

The protein localises to the cell membrane. The protein resides in the cytoplasm. It carries out the reaction 2-phenylethylamine + O2 + H2O = 2-phenylacetaldehyde + H2O2 + NH4(+). The enzyme catalyses tryptamine + O2 + H2O = indole-3-acetaldehyde + H2O2 + NH4(+). The catalysed reaction is tyramine + O2 + H2O = (4-hydroxyphenyl)acetaldehyde + H2O2 + NH4(+). Functionally, catalyzes the oxidative deamination of primary amines to the corresponding aldehydes with the concomitant production of hydrogen peroxide and ammonia. Has a preference for 2-phenylethylamine, tryptamine and tyramine. Could also act on methylamine and benzylamine but much less efficiently. The polypeptide is Amine oxidase [copper-containing] 2 (Homo sapiens (Human)).